Consider the following 160-residue polypeptide: Transcriptional repressor NrdR (160 aa).

A zinc finger lies at 3 to 34 (CPFCGAEDTSVVDSRVSEEGSRIRRRRQCTAC). One can recognise an ATP-cone domain in the interval 49-139 (PQIIKQGGNR…VYRSFEDVGD (91 aa)).

It belongs to the NrdR family. Zn(2+) serves as cofactor.

Functionally, negatively regulates transcription of bacterial ribonucleotide reductase nrd genes and operons by binding to NrdR-boxes. The chain is Transcriptional repressor NrdR from Nitrosomonas eutropha (strain DSM 101675 / C91 / Nm57).